We begin with the raw amino-acid sequence, 587 residues long: Deoxynucleoside triphosphate triphosphohydrolase sahd-1 (587 aa).

In terms of domain architecture, HD spans 92–262 (RFVHSLGTFS…GHDVDKMDYL (171 aa)). His95, His134, Asp135, and Asp257 together coordinate Zn(2+). Positions 554-587 (EKFLTPRKRSPQDSPDEVSSSCSTAKRRLEFGSS) are disordered. Thr558 carries the phosphothreonine modification.

This sequence belongs to the SAMHD1 family. In terms of assembly, homodimer. Homotetramer; in dGTP-bound form. Zn(2+) is required as a cofactor.

Its subcellular location is the nucleus. The protein resides in the chromosome. The enzyme catalyses a 2'-deoxyribonucleoside 5'-triphosphate + H2O = a 2'-deoxyribonucleoside + triphosphate + H(+). Allosterically activated and regulated by GTP or dGTP. Allosteric activation promotes the formation of highly active homotetramers. Phosphorylation impairs homotetramerization, thereby inhibiting dNTPase activity. Has deoxynucleoside triphosphate (dNTPase) activity. dNTPase activity acts as a regulator of DNA precursor pools by regulating dNTP pools. Phosphorylation acts as a switch to control dNTPase-dependent and -independent functions. The protein is Deoxynucleoside triphosphate triphosphohydrolase sahd-1 of Caenorhabditis elegans.